A 429-amino-acid chain; its full sequence is CinA-like protein (429 aa).

This sequence belongs to the CinA family.

The polypeptide is CinA-like protein (Chlorobium limicola (strain DSM 245 / NBRC 103803 / 6330)).